The primary structure comprises 1305 residues: Junctional cadherin 5-associated protein (1305 aa).

7 disordered regions span residues 13–86, 120–151, 249–419, 450–545, 575–604, 616–795, and 818–1005; these read YKLS…PSTA, REQE…VGGR, GVPK…HTTA, KLDG…CEMQ, IPVK…EQSV, ALTG…SRQL, and FNKE…GLSA. Composition is skewed to basic and acidic residues over residues 21 to 31, 69 to 82, 120 to 129, and 140 to 151; these read APHEDDGERRQ, PESR…HGER, REQEAREDPG, and HPREGPWEVGGR. Residues 337–358 are compositionally biased toward pro residues; sequence GLEPPVYVPPPSYKSPPQPAAH. The segment covering 360–369 has biased composition (basic and acidic residues); the sequence is CPEEAVSRHE. Composition is skewed to polar residues over residues 530-545 and 579-594; these read LVSS…CEMQ and SESQ…NDLK. Residues 595-604 show a composition bias toward low complexity; the sequence is QSASLQEQSV. Polar residues predominate over residues 669–683; sequence QQTQTSFAHEPQSLQ. The span at 729-748 shows a compositional bias: low complexity; sequence SPKSQGSLSPSSNSAFSGSS. Residue Ser841 is modified to Phosphoserine. Composition is skewed to basic and acidic residues over residues 878–889 and 945–958; these read SKSESWSEEGRP and AKPE…EQRE. Residues Ser1004, Ser1010, Ser1152, and Ser1239 each carry the phosphoserine modification. 2 disordered regions span residues 1062-1166 and 1234-1305; these read GAQR…DVET and SRAA…VERV. Positions 1276 to 1288 are enriched in basic and acidic residues; it reads ADGHPAARRENGG.

It is found in the cell junction. The protein resides in the adherens junction. The sequence is that of Junctional cadherin 5-associated protein (JCAD) from Bos taurus (Bovine).